Consider the following 221-residue polypeptide: Ras-related protein Rab-27A (221 aa).

At S2 the chain carries N-acetylserine. Residue S2 is modified to Phosphoserine. 16–24 lines the GTP pocket; that stretch reads GDSGVGKTS. An Effector region motif is present at residues 38-46; it reads FITTVGIDF. GTP contacts are provided by residues 74–78, 133–136, and 163–165; these read DTAGQ, NKSD, and SAA. C123 and C188 are oxidised to a cystine. Residues C219 and C221 are each lipidated (S-geranylgeranyl cysteine). Cysteine methyl ester is present on C221.

The protein belongs to the small GTPase superfamily. Rab family. In terms of assembly, binds SYTL1, SLAC2B, MYRIP, SYTL3, SYTL4 and SYTL5. Interacts with RPH3A and RPH3A. Binds MLPH and SYTL2. Interacts with UNC13D. Does not interact with the BLOC-3 complex (heterodimer of HPS1 and HPS4). Interacts (GDP-bound form preferentially) with DENND10. Found in all the examined tissues except in brain. Low expression was found in thymus, kidney, muscle and placenta. Detected in melanocytes, and in most tumor cell lines examined. Expressed in cytotoxic T-lymphocytes (CTL) and mast cells.

The protein resides in the membrane. It is found in the melanosome. The protein localises to the late endosome. It localises to the lysosome. The enzyme catalyses GTP + H2O = GDP + phosphate + H(+). Its activity is regulated as follows. Regulated by guanine nucleotide exchange factors (GEFs) which promote the exchange of bound GDP for free GTP, GTPase activating proteins (GAPs) which increase the GTP hydrolysis activity, and GDP dissociation inhibitors which inhibit the dissociation of the nucleotide from the GTPase. Activated by GEFs such as DENND10. Its function is as follows. Small GTPase which cycles between active GTP-bound and inactive GDP-bound states. In its active state, binds to a variety of effector proteins to regulate homeostasis of late endocytic pathway, including endosomal positioning, maturation and secretion. Plays a role in cytotoxic granule exocytosis in lymphocytes. Required for both granule maturation and granule docking and priming at the immunologic synapse. The protein is Ras-related protein Rab-27A (RAB27A) of Homo sapiens (Human).